A 183-amino-acid polypeptide reads, in one-letter code: Shikimate kinase (183 aa).

Position 19-24 (19-24 (GAGKTT)) interacts with ATP. Residue T23 participates in Mg(2+) binding. Residues D41, R65, and G87 each contribute to the substrate site. An ATP-binding site is contributed by R124. R143 contributes to the substrate binding site.

It belongs to the shikimate kinase family. Monomer. It depends on Mg(2+) as a cofactor.

It is found in the cytoplasm. It carries out the reaction shikimate + ATP = 3-phosphoshikimate + ADP + H(+). It functions in the pathway metabolic intermediate biosynthesis; chorismate biosynthesis; chorismate from D-erythrose 4-phosphate and phosphoenolpyruvate: step 5/7. Its function is as follows. Catalyzes the specific phosphorylation of the 3-hydroxyl group of shikimic acid using ATP as a cosubstrate. This chain is Shikimate kinase, found in Thermosynechococcus vestitus (strain NIES-2133 / IAM M-273 / BP-1).